Reading from the N-terminus, the 304-residue chain is Protein phosphatase PTC7 homolog (304 aa).

The N-terminal 68 residues, 1–68, are a transit peptide targeting the mitochondrion; that stretch reads MFSVLSYGRL…GDDACFVARH (68 aa). One can recognise a PPM-type phosphatase domain in the interval 69 to 299; it reads RSADVLGVAD…DDITVLLSIV (231 aa). Residues Asp78, Gly79, and Asp223 each contribute to the Mn(2+) site.

It belongs to the PP2C family. As to quaternary structure, interacts with FBXL4, BNIP3 and NIX; these interactions are important for ubiquitination and degradation of BNIP3 and NIX. Mg(2+) serves as cofactor. Mn(2+) is required as a cofactor. Expressed in keratinocytes (at protein level).

Its subcellular location is the mitochondrion matrix. The catalysed reaction is O-phospho-L-seryl-[protein] + H2O = L-seryl-[protein] + phosphate. The enzyme catalyses O-phospho-L-threonyl-[protein] + H2O = L-threonyl-[protein] + phosphate. With respect to regulation, inhibited by sodium orthovanadate. Protein phosphatase that plays an essential role in mitochondrial metabolism and biogenesis. Positively regulates biosynthesis of the ubiquinone, coenzyme Q. Dephosphorylates the ubiquinone biosynthesis protein COQ7 which is likely to lead to its activation. Serves as a crucial sensor for mitophagy, though the underlying mechanism remains ambiguous. May dephosphorylate BNIP3 and NIX and thereby directly regulates mitophagy receptor function and stability. Alternatively, promotes SCF-FBXL4-dependent ubiquitination and degradation of BNIP3 and NIX independently of its catalytic activity to restrain mitophagy. The protein is Protein phosphatase PTC7 homolog (PPTC7) of Homo sapiens (Human).